A 719-amino-acid polypeptide reads, in one-letter code: Homeobox protein SIX5 (719 aa).

Composition is skewed to low complexity over residues 1 to 22 (MATSPAEPSAGPAARGEAAAAT) and 31 to 65 (QLLQTLQAAEGEAAAAGAGDAAAAADSGSPSGPGS). Disordered stretches follow at residues 1 to 73 (MATS…VTEV) and 241 to 287 (WFKN…VASM). The homeobox DNA-binding region spans 194–253 (GEETVYCFKERSRAALKACYRGNRYPTPDEKRRLATLTGLSLTQVSNWFKNRRQRDRTGT). A compositionally biased stretch (basic and acidic residues) spans 272-282 (ESSRSPEDLER).

The protein belongs to the SIX/Sine oculis homeobox family. In terms of assembly, probably binds DNA dimer. Interacts with EYA3, and probably EYA1 and EYA2.

The protein resides in the nucleus. Its function is as follows. Transcription factor that is thought to be involved in regulation of organogenesis. May be involved in determination and maintenance of retina formation. Binds a 5'-GGTGTCAG-3' motif present in the ARE regulatory element of ATP1A1. Binds a 5'-TCA[AG][AG]TTNC-3' motif present in the MEF3 element in the myogenin promoter, and in the IGFBP5 promoter. Thought to be regulated by association with Dach and Eya proteins, and seems to be coactivated by EYA1, EYA2 and EYA3. The sequence is that of Homeobox protein SIX5 (Six5) from Mus musculus (Mouse).